We begin with the raw amino-acid sequence, 429 residues long: Enolase (429 aa).

A (2R)-2-phosphoglycerate-binding site is contributed by Gln163. Residue Glu205 is the Proton donor of the active site. Asp242, Glu285, and Asp312 together coordinate Mg(2+). Residues Lys337, Arg366, Ser367, and Lys388 each coordinate (2R)-2-phosphoglycerate. Catalysis depends on Lys337, which acts as the Proton acceptor.

Belongs to the enolase family. Requires Mg(2+) as cofactor.

It is found in the cytoplasm. It localises to the secreted. The protein localises to the cell surface. The enzyme catalyses (2R)-2-phosphoglycerate = phosphoenolpyruvate + H2O. It participates in carbohydrate degradation; glycolysis; pyruvate from D-glyceraldehyde 3-phosphate: step 4/5. Its function is as follows. Catalyzes the reversible conversion of 2-phosphoglycerate (2-PG) into phosphoenolpyruvate (PEP). It is essential for the degradation of carbohydrates via glycolysis. In Methylorubrum populi (strain ATCC BAA-705 / NCIMB 13946 / BJ001) (Methylobacterium populi), this protein is Enolase.